Consider the following 185-residue polypeptide: Small ribosomal subunit protein bS16 (185 aa).

The segment at 83-185 is disordered; the sequence is QWTHGNNPEK…APASEETTEG (103 aa). Residues 89 to 125 are compositionally biased toward basic and acidic residues; it reads NPEKAKPGKKAQERDAERTQRDADRVAAEAQAKEDAK. Low complexity-rich tracts occupy residues 126 to 146 and 159 to 176; these read AAAA…AAAP and VEAA…AEEA.

The protein belongs to the bacterial ribosomal protein bS16 family.

This chain is Small ribosomal subunit protein bS16, found in Caulobacter sp. (strain K31).